A 425-amino-acid chain; its full sequence is Serine--tRNA ligase (425 aa).

226 to 228 (TSE) serves as a coordination point for L-serine. Residues 257 to 259 (RRE) and Val273 contribute to the ATP site. An L-serine-binding site is contributed by Glu280. An ATP-binding site is contributed by 344–347 (ELTS). Residue Thr382 coordinates L-serine.

The protein belongs to the class-II aminoacyl-tRNA synthetase family. Type-1 seryl-tRNA synthetase subfamily. In terms of assembly, homodimer. The tRNA molecule binds across the dimer.

Its subcellular location is the cytoplasm. The catalysed reaction is tRNA(Ser) + L-serine + ATP = L-seryl-tRNA(Ser) + AMP + diphosphate + H(+). It catalyses the reaction tRNA(Sec) + L-serine + ATP = L-seryl-tRNA(Sec) + AMP + diphosphate + H(+). The protein operates within aminoacyl-tRNA biosynthesis; selenocysteinyl-tRNA(Sec) biosynthesis; L-seryl-tRNA(Sec) from L-serine and tRNA(Sec): step 1/1. Catalyzes the attachment of serine to tRNA(Ser). Is also able to aminoacylate tRNA(Sec) with serine, to form the misacylated tRNA L-seryl-tRNA(Sec), which will be further converted into selenocysteinyl-tRNA(Sec). In Mycobacterium avium (strain 104), this protein is Serine--tRNA ligase.